Reading from the N-terminus, the 1131-residue chain is Tyrosine-protein kinase JAK2 (1131 aa).

The interaction with cytokine/interferon/growth hormone receptors stretch occupies residues 1–239 (MGMACLTMTE…RYRFRRFIEQ (239 aa)). The 344-residue stretch at 37–380 (PVLQVYLYHS…GYYRLTADAH (344 aa)) folds into the FERM domain. A Phosphotyrosine; by autocatalysis modification is found at tyrosine 119. Phosphotyrosine occurs at positions 372 and 373. The region spanning 401–482 (HGPISMDFAI…NLKDLLNCYQ (82 aa)) is the SH2; atypical domain. Serine 523 is modified (phosphoserine). A Protein kinase 1 domain is found at 545-809 (LIFNESLGQG…AIIRDLNSLF (265 aa)). Tyrosine 570 and tyrosine 813 each carry phosphotyrosine. A Protein kinase 2 domain is found at 849 to 1126 (LKFLQQLGKG…RDLALRVDQI (278 aa)). An ATP-binding site is contributed by 855-863 (LGKGNFGSV). Tyrosine 868 bears the Phosphotyrosine; by autocatalysis mark. Position 882 (lysine 882) interacts with ATP. A phosphotyrosine; by autocatalysis mark is found at tyrosine 966 and tyrosine 972. The active-site Proton acceptor is aspartate 976. A phosphotyrosine; by autocatalysis mark is found at tyrosine 1007 and tyrosine 1008.

It belongs to the protein kinase superfamily. Tyr protein kinase family. JAK subfamily. As to quaternary structure, interacts with IL23R, SKB1 and STAM2. Interacts with EPOR. Interacts with LYN. Interacts with SIRPA. Interacts with SH2B1. Interacts with TEC. Interacts with IFNGR2 (via intracellular domain). Interacts with LEPR (Isoform B). Interacts with HSP90AB1; promotes functional activation in a heat shock-dependent manner. Interacts with STRA6. Interacts with ASB2; the interaction targets JAK2 for Notch-induced proteasomal degradation. The cofactor is Mg(2+). Post-translationally, autophosphorylated, leading to regulate its activity. Leptin promotes phosphorylation on tyrosine residues, including phosphorylation on Tyr-813. Autophosphorylation on Tyr-119 in response to EPO down-regulates its kinase activity. Autophosphorylation on Tyr-868, Tyr-966 and Tyr-972 in response to growth hormone (GH) are required for maximal kinase activity. Also phosphorylated by TEC. Phosphorylated on tyrosine residues in response to interferon gamma signaling. Phosphorylated on tyrosine residues in response to a signaling cascade that is activated by increased cellular retinol. In terms of processing, undergoes Notch-induced ubiquitination and subsequent proteasomal degradation which is mediated by ASB1 or ASB2, the substrate-recognition components of probable ECS E3 ubiquitin-protein ligase complexes.

It is found in the endomembrane system. It localises to the cytoplasm. The protein resides in the nucleus. It carries out the reaction L-tyrosyl-[protein] + ATP = O-phospho-L-tyrosyl-[protein] + ADP + H(+). With respect to regulation, regulated by autophosphorylation, can both activate or decrease activity. Heme regulates its activity by enhancing the phosphorylation on Tyr-1007 and Tyr-1008. Functionally, non-receptor tyrosine kinase involved in various processes such as cell growth, development, differentiation or histone modifications. Mediates essential signaling events in both innate and adaptive immunity. In the cytoplasm, plays a pivotal role in signal transduction via its association with type I receptors such as growth hormone (GHR), prolactin (PRLR), leptin (LEPR), erythropoietin (EPOR), thrombopoietin (THPO); or type II receptors including IFN-alpha, IFN-beta, IFN-gamma and multiple interleukins. Following ligand-binding to cell surface receptors, phosphorylates specific tyrosine residues on the cytoplasmic tails of the receptor, creating docking sites for STATs proteins. Subsequently, phosphorylates the STATs proteins once they are recruited to the receptor. Phosphorylated STATs then form homodimer or heterodimers and translocate to the nucleus to activate gene transcription. For example, cell stimulation with erythropoietin (EPO) during erythropoiesis leads to JAK2 autophosphorylation, activation, and its association with erythropoietin receptor (EPOR) that becomes phosphorylated in its cytoplasmic domain. Then, STAT5 (STAT5A or STAT5B) is recruited, phosphorylated and activated by JAK2. Once activated, dimerized STAT5 translocates into the nucleus and promotes the transcription of several essential genes involved in the modulation of erythropoiesis. Part of a signaling cascade that is activated by increased cellular retinol and that leads to the activation of STAT5 (STAT5A or STAT5B). In addition, JAK2 mediates angiotensin-2-induced ARHGEF1 phosphorylation. Plays a role in cell cycle by phosphorylating CDKN1B. Cooperates with TEC through reciprocal phosphorylation to mediate cytokine-driven activation of FOS transcription. In the nucleus, plays a key role in chromatin by specifically mediating phosphorylation of 'Tyr-41' of histone H3 (H3Y41ph), a specific tag that promotes exclusion of CBX5 (HP1 alpha) from chromatin. Up-regulates the potassium voltage-gated channel activity of KCNA3. The protein is Tyrosine-protein kinase JAK2 of Sus scrofa (Pig).